Here is a 532-residue protein sequence, read N- to C-terminus: CTP synthase (532 aa).

Positions 1 to 267 (MAKFIFVTGG…QDIIIEQLQL (267 aa)) are amidoligase domain. Ser13 serves as a coordination point for CTP. Position 13 (Ser13) interacts with UTP. Residue 14 to 19 (GLGKGI) coordinates ATP. Tyr54 is a binding site for L-glutamine. Asp71 contributes to the ATP binding site. Mg(2+)-binding residues include Asp71 and Glu141. CTP contacts are provided by residues 148 to 150 (DIE), 188 to 193 (KTKPIQ), and Lys224. Residues 188–193 (KTKPIQ) and Lys224 contribute to the UTP site. The 241-residue stretch at 292–532 (EISFVGKYIE…FIKAIVENNK (241 aa)) folds into the Glutamine amidotransferase type-1 domain. Position 354 (Gly354) interacts with L-glutamine. Cys381 (nucleophile; for glutamine hydrolysis) is an active-site residue. L-glutamine-binding positions include 382-385 (LGMQ), Glu405, and Arg461. Residues His506 and Glu508 contribute to the active site.

Belongs to the CTP synthase family. As to quaternary structure, homotetramer.

It carries out the reaction UTP + L-glutamine + ATP + H2O = CTP + L-glutamate + ADP + phosphate + 2 H(+). The catalysed reaction is L-glutamine + H2O = L-glutamate + NH4(+). The enzyme catalyses UTP + NH4(+) + ATP = CTP + ADP + phosphate + 2 H(+). Its pathway is pyrimidine metabolism; CTP biosynthesis via de novo pathway; CTP from UDP: step 2/2. Allosterically activated by GTP, when glutamine is the substrate; GTP has no effect on the reaction when ammonia is the substrate. The allosteric effector GTP functions by stabilizing the protein conformation that binds the tetrahedral intermediate(s) formed during glutamine hydrolysis. Inhibited by the product CTP, via allosteric rather than competitive inhibition. In terms of biological role, catalyzes the ATP-dependent amination of UTP to CTP with either L-glutamine or ammonia as the source of nitrogen. Regulates intracellular CTP levels through interactions with the four ribonucleotide triphosphates. The chain is CTP synthase from Mycoplasma mycoides subsp. mycoides SC (strain CCUG 32753 / NCTC 10114 / PG1).